The chain runs to 382 residues: Histidinol-phosphate aminotransferase (382 aa).

Residues 1 to 24 (MTSAPRPRPTLDDLPLREDLRGKS) form a disordered region. The segment covering 9-22 (PTLDDLPLREDLRG) has biased composition (basic and acidic residues). N6-(pyridoxal phosphate)lysine is present on Lys233.

Belongs to the class-II pyridoxal-phosphate-dependent aminotransferase family. Histidinol-phosphate aminotransferase subfamily. Homodimer. It depends on pyridoxal 5'-phosphate as a cofactor.

The enzyme catalyses L-histidinol phosphate + 2-oxoglutarate = 3-(imidazol-4-yl)-2-oxopropyl phosphate + L-glutamate. The protein operates within amino-acid biosynthesis; L-histidine biosynthesis; L-histidine from 5-phospho-alpha-D-ribose 1-diphosphate: step 7/9. The protein is Histidinol-phosphate aminotransferase of Mycobacterium ulcerans (strain Agy99).